The primary structure comprises 520 residues: tRNA (guanine-N(7)-)-methyltransferase non-catalytic subunit TRM82 (520 aa).

The interval 51-102 is disordered; it reads PLDSEISPDRASSAGTCAEPPEKRRKLTPPVDESGEAQTEQSAKAKARKSQT. 3 WD repeats span residues 105 to 145, 244 to 291, and 296 to 338; these read QAWS…KLTQ, GHVS…HIIH, and GHTS…QTIP.

It belongs to the WD repeat TRM82 family. Forms a heterodimer with the catalytic subunit TRM8.

It localises to the nucleus. It functions in the pathway tRNA modification; N(7)-methylguanine-tRNA biosynthesis. Required for the formation of N(7)-methylguanine at position 46 (m7G46) in tRNA. In the complex, it is required to stabilize and induce conformational changes of the catalytic subunit. This chain is tRNA (guanine-N(7)-)-methyltransferase non-catalytic subunit TRM82, found in Coccidioides immitis (strain RS) (Valley fever fungus).